The sequence spans 249 residues: Triosephosphate isomerase (249 aa).

Residues Asn-10 and Lys-12 each coordinate substrate. The Electrophile role is filled by His-94. Glu-166 functions as the Proton acceptor in the catalytic mechanism.

It belongs to the triosephosphate isomerase family. As to quaternary structure, homodimer.

The enzyme catalyses D-glyceraldehyde 3-phosphate = dihydroxyacetone phosphate. It functions in the pathway carbohydrate biosynthesis; gluconeogenesis. It participates in carbohydrate degradation; glycolysis; D-glyceraldehyde 3-phosphate from glycerone phosphate: step 1/1. The sequence is that of Triosephosphate isomerase (tpiA) from Emericella nidulans (strain FGSC A4 / ATCC 38163 / CBS 112.46 / NRRL 194 / M139) (Aspergillus nidulans).